The following is a 206-amino-acid chain: Small ribosomal subunit protein uS4 (206 aa).

Positions 96–156 (CRLDNVVYRM…EKAKNQLRIV (61 aa)) constitute an S4 RNA-binding domain.

It belongs to the universal ribosomal protein uS4 family. Part of the 30S ribosomal subunit. Contacts protein S5. The interaction surface between S4 and S5 is involved in control of translational fidelity.

Its function is as follows. One of the primary rRNA binding proteins, it binds directly to 16S rRNA where it nucleates assembly of the body of the 30S subunit. With S5 and S12 plays an important role in translational accuracy. The chain is Small ribosomal subunit protein uS4 from Pseudomonas savastanoi pv. phaseolicola (strain 1448A / Race 6) (Pseudomonas syringae pv. phaseolicola (strain 1448A / Race 6)).